The following is a 477-amino-acid chain: Ribosomal RNA small subunit methyltransferase F (477 aa).

Residues 125-131, glutamate 149, aspartate 176, and aspartate 194 contribute to the S-adenosyl-L-methionine site; that span reads AAAPGSK. The active-site Nucleophile is cysteine 247.

This sequence belongs to the class I-like SAM-binding methyltransferase superfamily. RsmB/NOP family.

It is found in the cytoplasm. The enzyme catalyses cytidine(1407) in 16S rRNA + S-adenosyl-L-methionine = 5-methylcytidine(1407) in 16S rRNA + S-adenosyl-L-homocysteine + H(+). Specifically methylates the cytosine at position 1407 (m5C1407) of 16S rRNA. This chain is Ribosomal RNA small subunit methyltransferase F, found in Klebsiella pneumoniae (strain 342).